The chain runs to 1071 residues: SLIT-ROBO Rho GTPase-activating protein 2 (1071 aa).

An F-BAR domain is found at 22-325 (KEIRAQLTEQ…AVENLDATSD (304 aa)). Residues 181–203 (LKEAEKQEEKQIGKSVKQEDRQT) are compositionally biased toward basic and acidic residues. A disordered region spans residues 181 to 211 (LKEAEKQEEKQIGKSVKQEDRQTPRSPDSTA). A Phosphoserine modification is found at serine 206. The stretch at 363–401 (QSELVQRCQQLQSRLSTLKIENEEVKKTMEATLQTIQDI) forms a coiled coil. Phosphoserine occurs at positions 427, 500, 691, and 695. Residues 489–679 (ARRSSTVRKQ…TIIIQHENIF (191 aa)) enclose the Rho-GAP domain. Residues 700-726 (CDSTHGETTSAEDSTQDVTAEHHTSDD) are disordered. Over residues 705-717 (GETTSAEDSTQDV) the composition is skewed to polar residues. Serine 724 is subject to Phosphoserine. Residues 728 to 787 (CEPIEAIAKFDYVGRTARELSFKKGASLLLYQRASDDWWEGRHNGIDGLIPHQYIVVQDT) enclose the SH3 domain. Serine 795 is modified (phosphoserine). 2 disordered regions span residues 795 to 819 (SSPK…TGAS) and 838 to 918 (RKRP…DSPQ). Over residues 855–868 (HGLGSSLTDSSSLG) the composition is skewed to low complexity. Polar residues-rich tracts occupy residues 874-885 (RPSSQPIMSQNL) and 897-907 (GHGSLNSISRH). Serine 916 is subject to Phosphoserine. Arginine 927 is subject to Symmetric dimethylarginine; by PRMT5. Serine 930 is modified (phosphoserine). Residues 940-968 (EVIAQDIEATMNSALNELQELERQSSAKH) are a coiled coil. The interval 984 to 1012 (PVVAPTSEPSSPLHTQLLKDPEPAFQRSA) is disordered. 4 positions are modified to phosphoserine: serine 990, serine 994, serine 1013, and serine 1027. The tract at residues 1029–1071 (KMAAPVKPPATRPKPTVFPKTNATSPGVNSSASPQATDKSCTV) is disordered. Residues 1047 to 1071 (PKTNATSPGVNSSASPQATDKSCTV) are compositionally biased toward polar residues.

Homodimer. Forms a heterooligomer with SRGAP1 and SRGAP3 through its F-BAR domain. Interacts (via SH3 domain) with GPHN. Interacts (via SH3 domain) with FMNL1 (activated by RAC1); regulates the actin filament severing activity of FMNL1 and actin dynamics. Interacts (via SH3 domain) with FMNL3. Interacts with RAC1; specifically stimulates RAC1 GTPase activity. Interacts (via F-BAR domain) with HOMER1. Interacts with ROBO1 and ROBO2. Interacts with FASLG. Interacts with PRMT5. In terms of processing, methylation at Arg-927 is required for the stimulation of cell migration, dimerization and localization at the plasma membrane protrusions.

It is found in the cell membrane. Its subcellular location is the cell projection. The protein resides in the dendritic spine. The protein localises to the postsynaptic density. It localises to the postsynaptic cell membrane. It is found in the lamellipodium. Its subcellular location is the cytoplasmic vesicle. The protein resides in the phagosome. The protein localises to the nucleus. It localises to the cytoplasm. It is found in the cytosol. In terms of biological role, postsynaptic RAC1 GTPase activating protein (GAP) that plays a key role in neuronal morphogenesis and migration mainly during development of the cerebral cortex. Regulates excitatory and inhibitory synapse maturation and density in cortical pyramidal neurons. SRGAP2/SRGAP2A limits excitatory and inhibitory synapse density through its RAC1-specific GTPase activating activity, while it promotes maturation of both excitatory and inhibitory synapses through its ability to bind to the postsynaptic scaffolding protein HOMER1 at excitatory synapses, and the postsynaptic protein GPHN at inhibitory synapses. Mechanistically, acts by binding and deforming membranes, thereby regulating actin dynamics to regulate cell migration and differentiation. Promotes cell repulsion and contact inhibition of locomotion: localizes to protrusions with curved edges and controls the duration of RAC1 activity in contact protrusions. In non-neuronal cells, may also play a role in cell migration by regulating the formation of lamellipodia and filopodia. The chain is SLIT-ROBO Rho GTPase-activating protein 2 from Mus musculus (Mouse).